The chain runs to 443 residues: GPI mannosyltransferase 1 (443 aa).

The next 11 helical transmembrane spans lie at 8 to 28 (PFMVYGLAAGLRTVLLFYGAW), 68 to 88 (PLLAWMLLPTTWAIPGFFSFG), 90 to 110 (ALFALSDVVAGWLVAKSLTLT), 136 to 156 (TRGSSEGLLGVLVVALLWAVL), 160 to 180 (IYLGGVLLGIGVHFKIYPFIY), 232 to 252 (LTLISLLTFVALNAAMYLHYG), 273 to 291 (FSPYSTLLYLTAASSAGAV), 302 to 322 (FESLAFIPQLLISVVVIPLVL), 347 to 367 (SQYFLWYLIFLPFYLPTSSLL), 374 to 394 (IAVAALWILGQALWLQQGYLL), and 406 to 426 (LFLASLGFFAVNAWILGVIVA).

The protein belongs to the PIGM family.

The protein resides in the endoplasmic reticulum membrane. Its pathway is glycolipid biosynthesis; glycosylphosphatidylinositol-anchor biosynthesis. In terms of biological role, mannosyltransferase involved in glycosylphosphatidylinositol-anchor biosynthesis. Transfers the first alpha-1,4-mannose to GlcN-acyl-PI during GPI precursor assembly. Required for cell wall integrity. This chain is GPI mannosyltransferase 1 (gpi14), found in Emericella nidulans (strain FGSC A4 / ATCC 38163 / CBS 112.46 / NRRL 194 / M139) (Aspergillus nidulans).